Reading from the N-terminus, the 185-residue chain is Large ribosomal subunit protein uL5 (185 aa).

This sequence belongs to the universal ribosomal protein uL5 family. In terms of assembly, part of the 50S ribosomal subunit; part of the 5S rRNA/L5/L18/L25 subcomplex. Contacts the 5S rRNA and the P site tRNA. Forms a bridge to the 30S subunit in the 70S ribosome.

Functionally, this is one of the proteins that bind and probably mediate the attachment of the 5S RNA into the large ribosomal subunit, where it forms part of the central protuberance. In the 70S ribosome it contacts protein S13 of the 30S subunit (bridge B1b), connecting the 2 subunits; this bridge is implicated in subunit movement. Contacts the P site tRNA; the 5S rRNA and some of its associated proteins might help stabilize positioning of ribosome-bound tRNAs. This chain is Large ribosomal subunit protein uL5, found in Azorhizobium caulinodans (strain ATCC 43989 / DSM 5975 / JCM 20966 / LMG 6465 / NBRC 14845 / NCIMB 13405 / ORS 571).